The primary structure comprises 270 residues: Aliphatic sulfonates import ATP-binding protein SsuB (270 aa).

One can recognise an ABC transporter domain in the interval 17–238 (LAANDLRRTF…VRGSHRLAAL (222 aa)). 49–56 (GRSGCGKS) serves as a coordination point for ATP. Residues 250 to 270 (PGTPPEPEPVAPLPTHLRWAH) form a disordered region. Residues 251-261 (GTPPEPEPVAP) show a composition bias toward pro residues.

Belongs to the ABC transporter superfamily. Aliphatic sulfonates importer (TC 3.A.1.17.2) family. As to quaternary structure, the complex is composed of two ATP-binding proteins (SsuB), two transmembrane proteins (SsuC) and a solute-binding protein (SsuA).

Its subcellular location is the cell inner membrane. It carries out the reaction ATP + H2O + aliphatic sulfonate-[sulfonate-binding protein]Side 1 = ADP + phosphate + aliphatic sulfonateSide 2 + [sulfonate-binding protein]Side 1.. Part of the ABC transporter complex SsuABC involved in aliphatic sulfonates import. Responsible for energy coupling to the transport system. The protein is Aliphatic sulfonates import ATP-binding protein SsuB of Pseudomonas entomophila (strain L48).